The primary structure comprises 301 residues: Glycine cleavage system transcriptional activator homolog (301 aa).

The region spanning 10 to 67 is the HTH lysR-type domain; that stretch reads PPLNSLKSFESAARYLSFTKAADELCVTQAAVSHQIKLLEXFLGIDLFKRKNRSLELT. Residues 27–46 constitute a DNA-binding region (H-T-H motif); it reads FTKAADELCVTQAAVSHQIK.

It belongs to the LysR transcriptional regulatory family.

The protein resides in the cytoplasm. In terms of biological role, not known, the gcv operon regulated by the E.coli homolog does not exist in H.influenzae, so it probably acts as a transcriptional regulator on some other operon. The protein is Glycine cleavage system transcriptional activator homolog (gcvA) of Haemophilus influenzae (strain ATCC 51907 / DSM 11121 / KW20 / Rd).